We begin with the raw amino-acid sequence, 319 residues long: Aspartate carbamoyltransferase catalytic subunit (319 aa).

The carbamoyl phosphate site is built by R54 and T55. K82 provides a ligand contact to L-aspartate. 3 residues coordinate carbamoyl phosphate: R104, H134, and Q137. Positions 171 and 227 each coordinate L-aspartate. The carbamoyl phosphate site is built by G271 and P272.

The protein belongs to the aspartate/ornithine carbamoyltransferase superfamily. ATCase family. In terms of assembly, heterododecamer (2C3:3R2) of six catalytic PyrB chains organized as two trimers (C3), and six regulatory PyrI chains organized as three dimers (R2).

The catalysed reaction is carbamoyl phosphate + L-aspartate = N-carbamoyl-L-aspartate + phosphate + H(+). Its pathway is pyrimidine metabolism; UMP biosynthesis via de novo pathway; (S)-dihydroorotate from bicarbonate: step 2/3. Catalyzes the condensation of carbamoyl phosphate and aspartate to form carbamoyl aspartate and inorganic phosphate, the committed step in the de novo pyrimidine nucleotide biosynthesis pathway. This is Aspartate carbamoyltransferase catalytic subunit from Kineococcus radiotolerans (strain ATCC BAA-149 / DSM 14245 / SRS30216).